The chain runs to 175 residues: NADH-ubiquinone oxidoreductase chain 6 (175 aa).

5 consecutive transmembrane segments (helical) span residues 1–21 (MMTYIVFILSVIFVVSFVGFS), 25–45 (SPIYGGLVLIVSGGVGCGIIM), 47–67 (FGGSFLGLMVFLIYLGGMLVV), 88–108 (TVMGVFLLGLLMEVMLVLYVL), and 149–169 (YGAWVVIVTGWSLLVGVLVIL).

It belongs to the complex I subunit 6 family. In terms of assembly, core subunit of respiratory chain NADH dehydrogenase (Complex I) which is composed of 45 different subunits.

It localises to the mitochondrion inner membrane. It carries out the reaction a ubiquinone + NADH + 5 H(+)(in) = a ubiquinol + NAD(+) + 4 H(+)(out). Its function is as follows. Core subunit of the mitochondrial membrane respiratory chain NADH dehydrogenase (Complex I) which catalyzes electron transfer from NADH through the respiratory chain, using ubiquinone as an electron acceptor. Essential for the catalytic activity and assembly of complex I. In Equus caballus (Horse), this protein is NADH-ubiquinone oxidoreductase chain 6 (MT-ND6).